The sequence spans 45 residues: Phospholipase A2 3 (45 aa).

3 residues coordinate Ca(2+): tyrosine 20, glycine 24, and glycine 25. Cysteine 21 and cysteine 36 are disulfide-bonded. Histidine 39 is an active-site residue. Aspartate 40 contributes to the Ca(2+) binding site.

Ca(2+) is required as a cofactor. Expressed by the venom gland.

Its subcellular location is the secreted. The enzyme catalyses a 1,2-diacyl-sn-glycero-3-phosphocholine + H2O = a 1-acyl-sn-glycero-3-phosphocholine + a fatty acid + H(+). In terms of biological role, PLA2 catalyzes the calcium-dependent hydrolysis of the 2-acyl groups in 3-sn-phosphoglycerides. The chain is Phospholipase A2 3 from Bothrops diporus (Chaco lancehead).